The chain runs to 229 residues: MARATLEKKPREVARMFDAVGKKYDLTNTVLTGGIDTLWRKATRKRLDPKPGEKVVDLAAGTGVSTAELSKSGALVVGCDFSLGMLKAGRHRNVPLVAGDGLNLPFADNTFDAATISFGLRNFGDTAAGLREIARVVKPGGRLTVCEFSTPVIPVFSTIYTEYLMRALPTVAKIVSSDPESYVYLAESIRAWPDQETLARIIQSAGWKEVGWRNLTGGIVALHSATKPR.

S-adenosyl-L-methionine contacts are provided by residues Thr-62, Asp-80, 100–101 (DG), and Ser-117.

Belongs to the class I-like SAM-binding methyltransferase superfamily. MenG/UbiE family.

It carries out the reaction a 2-demethylmenaquinol + S-adenosyl-L-methionine = a menaquinol + S-adenosyl-L-homocysteine + H(+). Its pathway is quinol/quinone metabolism; menaquinone biosynthesis; menaquinol from 1,4-dihydroxy-2-naphthoate: step 2/2. Functionally, methyltransferase required for the conversion of demethylmenaquinol (DMKH2) to menaquinol (MKH2). In Corynebacterium kroppenstedtii (strain DSM 44385 / JCM 11950 / CIP 105744 / CCUG 35717), this protein is Demethylmenaquinone methyltransferase.